The primary structure comprises 376 residues: MLSSAHVVPTSVRRAPSWICSSSRSFMDLKALLSSLNDFASLSFAESWDNVGLLVEPSPPHTVNTLFLTNDLTEEVMEEALQKKADLILSYHPPIFRPMKHITWKTWKERLVIRALENRVAIYSPHTAYDAAPQGVNSWLAKGLGTCTTRPIHPSKAPNYPTEGTHRLEFSANHSQDLDKVMSAVKGVGGVSVTSFPARCDGEEQTRVSLNCTQKALMQVLAFLSQDRQLYQKTEILSLEKPLLLHTGMGRLCTLDESVSLATMIERIKRHLKLPHLRLALGVGRTLESPVKVVALCAGSGGSVLQGVEADLYLTGEMSHHDVLDAASKGINVILCEHSNTERGFLSDLQEMLGVHLENKINIILSETDRDPLRVV.

Lys108 is modified (N6-acetyllysine). The tract at residues 243-376 (LLLHTGMGRL…ETDRDPLRVV (134 aa)) is mediates interaction with COPS2. At Thr254 the chain carries Phosphothreonine. Phosphoserine is present on Ser258.

The protein belongs to the GTP cyclohydrolase I type 2/NIF3 family. In terms of assembly, homodimer. Interacts with COPS2. Interacts with THOC7.

It is found in the cytoplasm. The protein resides in the nucleus. Its function is as follows. May function as a transcriptional corepressor through its interaction with COPS2, negatively regulating the expression of genes involved in neuronal differentiation. The sequence is that of NIF3-like protein 1 from Rattus norvegicus (Rat).